Reading from the N-terminus, the 152-residue chain is Lipoprotein signal peptidase (152 aa).

2 helical membrane-spanning segments follow: residues 55 to 75 and 87 to 107; these read NGRWFFVAVAALAVAGILYYL and VALGLVMGGAVGNMIDRIATG. Active-site residues include Asp-111 and Asp-129. Residues 125 to 145 traverse the membrane as a helical segment; sequence FNVADICVTVGVGLLFLHLVL.

This sequence belongs to the peptidase A8 family.

Its subcellular location is the cell membrane. It carries out the reaction Release of signal peptides from bacterial membrane prolipoproteins. Hydrolyzes -Xaa-Yaa-Zaa-|-(S,diacylglyceryl)Cys-, in which Xaa is hydrophobic (preferably Leu), and Yaa (Ala or Ser) and Zaa (Gly or Ala) have small, neutral side chains.. The protein operates within protein modification; lipoprotein biosynthesis (signal peptide cleavage). This protein specifically catalyzes the removal of signal peptides from prolipoproteins. This is Lipoprotein signal peptidase from Symbiobacterium thermophilum (strain DSM 24528 / JCM 14929 / IAM 14863 / T).